The sequence spans 1411 residues: Zinc finger protein 609 (1411 aa).

Disordered regions lie at residues 1 to 26, 47 to 190, 353 to 484, 517 to 659, 679 to 963, 1005 to 1125, 1153 to 1221, and 1270 to 1367; these read MSLSSGASGGKGVDANPVETYDSGDE, QKLE…QPVP, PRFC…EPTV, AHAH…ARPI, ASPG…VIQQ, YEEQ…RQAE, KSED…LTQH, and GSKV…STHH. A phosphoserine mark is found at Ser358, Ser361, and Ser379. The segment covering 377–401 has biased composition (polar residues); sequence PNSNTPVNETATASDSKGTSNSSKT. Thr381 carries the post-translational modification Phosphothreonine. 6 positions are modified to phosphoserine: Ser413, Ser433, Ser446, Ser452, Ser467, and Ser470. Polar residues predominate over residues 423-437; that stretch reads ASSTSEDVKASPSSA. A Glycyl lysine isopeptide (Lys-Gly) (interchain with G-Cter in SUMO2) cross-link involves residue Lys479. A C2H2-type zinc finger spans residues 495–520; the sequence is IDCPHPNCNKKYKHINGLKYHQAHAH. Residues 519–529 are compositionally biased toward basic and acidic residues; the sequence is AHTDDDSKPEA. Ser533 is subject to Phosphoserine. The span at 549 to 563 shows a compositional bias: polar residues; the sequence is NGASVSQKGSLSPAR. 2 positions are modified to phosphoserine: Ser576 and Ser578. Basic and acidic residues predominate over residues 626–649; the sequence is SLERKCMEKEKCKKPSSLKPEKIP. Polar residues predominate over residues 679–700; sequence ASPGSSSGLTATVAQAMPNSPQ. Over residues 726–736 the composition is skewed to basic residues; the sequence is DKKKKDKKKKE. Ser743 is modified (phosphoserine). Thr746 is subject to Phosphothreonine. Residues 751–764 are compositionally biased toward basic and acidic residues; it reads CRAEEGKSPFRESS. Ser758 is subject to Phosphoserine. Residue Lys789 forms a Glycyl lysine isopeptide (Lys-Gly) (interchain with G-Cter in SUMO2) linkage. Residues 798–844 are compositionally biased toward polar residues; the sequence is FTDNAPSPSIGGSSRLENTTPTQPLTPLHVVTQNGAEASSVKTNSPA. Phosphoserine is present on Ser804. Thr823 carries the post-translational modification Phosphothreonine. Residues Ser842, Ser846, and Ser849 each carry the phosphoserine modification. Residues 855-876 are compositionally biased toward basic and acidic residues; that stretch reads GEGKVDSVKSKDAEQLVKEGAK. Positions 897-908 are enriched in low complexity; it reads SYYSPSYAQSSP. The segment covering 926-950 has biased composition (basic and acidic residues); that stretch reads TKRDEEPESIEGKVKNDICEEKKPE. The span at 952–963 shows a compositional bias: low complexity; sequence SSSSQQPSVIQQ. Residues 1020–1042 are compositionally biased toward basic and acidic residues; it reads GVDKKAEMGLKEREAALKEEWKQ. Residue Ser1055 is modified to Phosphoserine. Lys1061 is covalently cross-linked (Glycyl lysine isopeptide (Lys-Gly) (interchain with G-Cter in SUMO2)). Basic and acidic residues-rich tracts occupy residues 1097–1113, 1153–1187, and 1195–1208; these read LKVKLSDASHLSKEASE, KSEDERWKEERDRKLKEERSRSKDSVPKEDGKEST, and TSEESRLGSKEPRP. A Glycyl lysine isopeptide (Lys-Gly) (interchain with G-Cter in SUMO2) cross-link involves residue Lys1153. Over residues 1286–1296 the composition is skewed to polar residues; it reads PSVTCKSSSES. A Glycyl lysine isopeptide (Lys-Gly) (interchain with G-Cter in SUMO2) cross-link involves residue Lys1297. Residues 1328–1337 are compositionally biased toward gly residues; that stretch reads GCGVVGGGGS.

In terms of assembly, interacts (via N-terminus) with NIPBL. Interacts with INTS13; promoting association with the integrator complex. Isoform 1: Expressed in myoblasts and myotubes. Isoform 2: Expressed in myoblasts and myotubes, with a preference in undifferentiated myoblasts.

It is found in the nucleus. Its function is as follows. Transcription factor, which activates RAG1, and possibly RAG2, transcription. Through the regulation of RAG1/2 expression, may regulate thymocyte maturation. Along with NIPBL and the multiprotein complex Integrator, promotes cortical neuron migration during brain development by regulating the transcription of crucial genes in this process. Preferentially binds promoters containing paused RNA polymerase II. Up-regulates the expression of SEMA3A, NRP1, PLXND1 and GABBR2 genes, among others. Involved in the regulation of myoblast proliferation during myogenesis. The protein is Zinc finger protein 609 of Homo sapiens (Human).